Consider the following 359-residue polypeptide: Ribosomal RNA large subunit methyltransferase M (359 aa).

S-adenosyl-L-methionine contacts are provided by residues Ser-186, 219–222 (CPGG), Asp-238, Asp-258, and Asp-275. The active-site Proton acceptor is Lys-304.

Belongs to the class I-like SAM-binding methyltransferase superfamily. RNA methyltransferase RlmE family. RlmM subfamily. Monomer.

It localises to the cytoplasm. It carries out the reaction cytidine(2498) in 23S rRNA + S-adenosyl-L-methionine = 2'-O-methylcytidine(2498) in 23S rRNA + S-adenosyl-L-homocysteine + H(+). Functionally, catalyzes the 2'-O-methylation at nucleotide C2498 in 23S rRNA. The chain is Ribosomal RNA large subunit methyltransferase M from Aliivibrio fischeri (strain MJ11) (Vibrio fischeri).